Reading from the N-terminus, the 344-residue chain is uncharacterized protein (344 aa).

Belongs to the glycosyltransferase 2 family.

May be involved in the production of the exopolysaccharide (EPS) component of the extracellular matrix during biofilm formation. EPS is responsible for the adhesion of chains of cells into bundles. This is an uncharacterized protein from Bacillus subtilis (strain 168).